The chain runs to 384 residues: Zinc finger protein GLIS2 homolog (384 aa).

A C2H2-type 1 zinc finger spans residues 128-153; it reads FVCNWTDCDRVFDTLDALAQHVTQRH. The segment at 163–190 adopts a C2H2-type 2; degenerate zinc-finger fold; that stretch reads YYCRWRGCQRSERGFNARYKMLVHTRTH. 3 consecutive C2H2-type zinc fingers follow at residues 196–218, 224–248, and 254–280; these read HRCH…IRSH, YKCS…TRTH, and YMCK…TFKH. Residues 321-343 form a disordered region; that stretch reads SSSSARYYDDSNNEPSDYSLKPK.

It belongs to the GLI C2H2-type zinc-finger protein family.

It is found in the nucleus. Functionally, transcription factor which represses a set of lipase genes involved in fat catabolism. The protein is Zinc finger protein GLIS2 homolog (sug) of Drosophila melanogaster (Fruit fly).